Consider the following 78-residue polypeptide: U5-ctenitoxin-Pk1a (78 aa).

7 disulfides stabilise this stretch: cysteine 6–cysteine 23, cysteine 13–cysteine 29, cysteine 20–cysteine 52, cysteine 22–cysteine 40, cysteine 31–cysteine 38, cysteine 58–cysteine 73, and cysteine 69–cysteine 77.

In terms of tissue distribution, expressed by the venom gland.

It is found in the secreted. In terms of biological role, lethal neurotoxin. Causes spastic paralysis and death in mice in 4-6 minutes after intracerebroventricular injection at dose levels of 1.5 ug per mouse. This is U5-ctenitoxin-Pk1a from Phoneutria keyserlingi (Brazilian wandering spider).